Here is a 344-residue protein sequence, read N- to C-terminus: Beta-1,4-galactosyltransferase 4 (344 aa).

Over 1–12 the chain is Cytoplasmic; it reads MGCNPPYHLSYR. The helical; Signal-anchor for type II membrane protein transmembrane segment at 13–38 threads the bilayer; that stretch reads LRLLLLFTLCLTVVGWATSNYFVGAI. Topologically, residues 39–344 are lumenal; sequence QVIPKAKDFM…NITVDFWTAA (306 aa). A disulfide bond links Cys-77 and Cys-118. UDP-alpha-D-galactose contacts are provided by residues 129 to 133, 168 to 170, and 195 to 196; these read PHRNR, FNR, and VD. Cys-189 and Cys-208 are oxidised to a cystine. Asp-196 serves as a coordination point for Mn(2+). N-linked (GlcNAc...) asparagine glycosylation is present at Asn-220. Positions 224 and 256 each coordinate UDP-alpha-D-galactose. Residue 258-261 participates in N-acetyl-D-glucosamine binding; it reads GEDD. Residue His-289 participates in Mn(2+) binding. 289 to 291 is a binding site for UDP-alpha-D-galactose; the sequence is HTR. Arg-301 is an N-acetyl-D-glucosamine binding site. N-linked (GlcNAc...) asparagine glycosylation occurs at Asn-335.

It belongs to the glycosyltransferase 7 family. As to quaternary structure, interacts with SLC35A2/UGT1. Requires Mn(2+) as cofactor.

The protein resides in the golgi apparatus membrane. It is found in the secreted. It catalyses the reaction N-acetyl-D-glucosamine + UDP-alpha-D-galactose = beta-D-galactosyl-(1-&gt;4)-N-acetyl-D-glucosamine + UDP + H(+). The catalysed reaction is a beta-D-GlcNAc-(1-&gt;3)-beta-D-Gal-(1-&gt;4)-beta-D-Glc-(1&lt;-&gt;1)-Cer(d18:1(4E)) + UDP-alpha-D-galactose = a neolactoside nLc4Cer(d18:1(4E)) + UDP + H(+). The enzyme catalyses 3-O-{beta-D-galactosyl-(1-&gt;3)-[6-O-sulfo-N-acetyl-beta-D-glucosaminyl-(1-&gt;6)]-N-acetyl-alpha-D-galactosaminyl}-L-seryl-[protein] + UDP-alpha-D-galactose = 3-O-{beta-D-galactosyl-(1-&gt;3)-[beta-D-galactosyl-(1-&gt;4)-6-O-sulfo-N-acetyl-beta-D-glucosaminyl-(1-&gt;6)]-N-acetyl-alpha-D-galactosaminyl}-L-seryl-[protein] + UDP + H(+). It carries out the reaction 3-O-{beta-D-galactosyl-(1-&gt;3)-[6-O-sulfo-N-acetyl-beta-D-glucosaminyl-(1-&gt;6)]-N-acetyl-alpha-D-galactosaminyl}-L-threonyl-[protein] + UDP-alpha-D-galactose = 3-O-{beta-D-galactosyl-(1-&gt;3)-[beta-D-galactosyl-(1-&gt;4)-6-O-sulfo-N-acetyl-beta-D-glucosaminyl-(1-&gt;6)]-N-acetyl-alpha-D-galactosaminyl}-L-threonyl-[protein] + UDP + H(+). It participates in protein modification; protein glycosylation. It functions in the pathway glycolipid biosynthesis. Functionally, galactose (Gal) transferase involved in the synthesis of terminal N-acetyllactosamine (LacNac) unit present on glycan chains of glycoproteins and glycosphingolipids. Catalyzes the transfer of Gal residue via a beta1-&gt;4 linkage from UDP-Gal to the non-reducing terminal N-acetyl glucosamine 6-O-sulfate (6-O-sulfoGlcNAc) in the linearly growing chain of both N- and O-linked keratan sulfate proteoglycans. Cooperates with B3GNT7 N-acetyl glucosamine transferase and CHST6 and CHST1 sulfotransferases to construct and elongate mono- and disulfated disaccharide units [-&gt;3Galbeta1-&gt;4(6-sulfoGlcNAcbeta)1-&gt;] and [-&gt;3(6-sulfoGalbeta)1-&gt;4(6-sulfoGlcNAcbeta)1-&gt;] within keratan sulfate polymer. Transfers Gal residue via a beta1-&gt;4 linkage to terminal 6-O-sulfoGlcNAc within the LacNac unit of core 2 O-glycans forming 6-sulfo-sialyl-Lewis X (sLex). May contribute to the generation of sLex epitope on mucin-type glycoproteins that serve as ligands for SELL/L-selectin, a major regulator of leukocyte migration. In the biosynthesis pathway of neolacto-series glycosphingolipids, transfers Gal residue via a beta1-&gt;4 linkage to terminal GlcNAc of a lactotriaosylceramide (Lc3Cer) acceptor to form a neolactotetraosylceramide. In Mus musculus (Mouse), this protein is Beta-1,4-galactosyltransferase 4.